The primary structure comprises 403 residues: Tryptophan 2,3-dioxygenase (403 aa).

69–73 (FIVIH) contacts substrate. The PLD motif; required for enzymatic activity signature appears at 133-135 (PLD). Substrate is bound at residue arginine 140. Histidine 327 serves as a coordination point for heme. Threonine 341 provides a ligand contact to substrate.

The protein belongs to the tryptophan 2,3-dioxygenase family. As to quaternary structure, homotetramer. Dimer of dimers. Heme is required as a cofactor. In terms of tissue distribution, expressed in body wall muscle cells, hypodermis, PLM neurons and touch-receptor neurons.

It carries out the reaction L-tryptophan + O2 = N-formyl-L-kynurenine. It functions in the pathway amino-acid degradation; L-tryptophan degradation via kynurenine pathway; L-kynurenine from L-tryptophan: step 1/2. Its function is as follows. Heme-dependent dioxygenase that catalyzes the oxidative cleavage of the L-tryptophan (L-Trp) pyrrole ring and converts L-tryptophan to N-formyl-L-kynurenine. Catalyzes the oxidative cleavage of the indole moiety. Involved in regulation of protein homeostasis, longevity and reproducive life span. Specifically regulates proteotoxicity due to age-related aggregation of proteins like alpha-synuclein, via its effects on tryptophan metabolism. In Caenorhabditis elegans, this protein is Tryptophan 2,3-dioxygenase.